Consider the following 54-residue polypeptide: UPF0391 membrane protein Bpro_0879 (54 aa).

The next 2 helical transmembrane spans lie at 6 to 26 and 30 to 50; these read VVFL…IAAG and IAKI…VMGL.

The protein belongs to the UPF0391 family.

Its subcellular location is the cell membrane. The sequence is that of UPF0391 membrane protein Bpro_0879 from Polaromonas sp. (strain JS666 / ATCC BAA-500).